Here is a 551-residue protein sequence, read N- to C-terminus: Adenine deaminase (551 aa).

The protein belongs to the metallo-dependent hydrolases superfamily. Adenine deaminase family. The cofactor is Mn(2+).

It catalyses the reaction adenine + H2O + H(+) = hypoxanthine + NH4(+). The polypeptide is Adenine deaminase (Leuconostoc citreum (strain KM20)).